A 633-amino-acid chain; its full sequence is Threonine--tRNA ligase (633 aa).

The 61-residue stretch at 1–61 (MINITLPDGS…DHDASLRIIT (61 aa)) folds into the TGS domain. The tract at residues 243–534 (DHRRIGKQQD…LIEHHAGQFP (292 aa)) is catalytic. Zn(2+) contacts are provided by Cys334, His385, and His511.

Belongs to the class-II aminoacyl-tRNA synthetase family. Homodimer. Zn(2+) serves as cofactor.

The protein localises to the cytoplasm. The catalysed reaction is tRNA(Thr) + L-threonine + ATP = L-threonyl-tRNA(Thr) + AMP + diphosphate + H(+). Catalyzes the attachment of threonine to tRNA(Thr) in a two-step reaction: L-threonine is first activated by ATP to form Thr-AMP and then transferred to the acceptor end of tRNA(Thr). Also edits incorrectly charged L-seryl-tRNA(Thr). The sequence is that of Threonine--tRNA ligase from Stenotrophomonas maltophilia (strain R551-3).